The sequence spans 204 residues: Thiamine-phosphate synthase (204 aa).

4-amino-2-methyl-5-(diphosphooxymethyl)pyrimidine contacts are provided by residues 34 to 38 and aspartate 66; that span reads QYRDK. Positions 67 and 86 each coordinate Mg(2+). Serine 104 serves as a coordination point for 4-amino-2-methyl-5-(diphosphooxymethyl)pyrimidine. 131-133 contributes to the 2-[(2R,5Z)-2-carboxy-4-methylthiazol-5(2H)-ylidene]ethyl phosphate binding site; sequence TST. Residue lysine 134 coordinates 4-amino-2-methyl-5-(diphosphooxymethyl)pyrimidine. 2-[(2R,5Z)-2-carboxy-4-methylthiazol-5(2H)-ylidene]ethyl phosphate contacts are provided by residues glycine 160 and 180-181; that span reads VS.

The protein belongs to the thiamine-phosphate synthase family. Requires Mg(2+) as cofactor.

It catalyses the reaction 2-[(2R,5Z)-2-carboxy-4-methylthiazol-5(2H)-ylidene]ethyl phosphate + 4-amino-2-methyl-5-(diphosphooxymethyl)pyrimidine + 2 H(+) = thiamine phosphate + CO2 + diphosphate. It carries out the reaction 2-(2-carboxy-4-methylthiazol-5-yl)ethyl phosphate + 4-amino-2-methyl-5-(diphosphooxymethyl)pyrimidine + 2 H(+) = thiamine phosphate + CO2 + diphosphate. The enzyme catalyses 4-methyl-5-(2-phosphooxyethyl)-thiazole + 4-amino-2-methyl-5-(diphosphooxymethyl)pyrimidine + H(+) = thiamine phosphate + diphosphate. It participates in cofactor biosynthesis; thiamine diphosphate biosynthesis; thiamine phosphate from 4-amino-2-methyl-5-diphosphomethylpyrimidine and 4-methyl-5-(2-phosphoethyl)-thiazole: step 1/1. Its function is as follows. Condenses 4-methyl-5-(beta-hydroxyethyl)thiazole monophosphate (THZ-P) and 2-methyl-4-amino-5-hydroxymethyl pyrimidine pyrophosphate (HMP-PP) to form thiamine monophosphate (TMP). The protein is Thiamine-phosphate synthase of Picrophilus torridus (strain ATCC 700027 / DSM 9790 / JCM 10055 / NBRC 100828 / KAW 2/3).